The primary structure comprises 554 residues: uncharacterized protein (554 aa).

The first 33 residues, 1–33 (MKKILIIILFIIIFIVLIYSGLWFVIMFSLSHS), serve as a signal peptide directing secretion.

This is an uncharacterized protein from Rickettsia prowazekii (strain Madrid E).